We begin with the raw amino-acid sequence, 1162 residues long: DNA-directed RNA polymerase subunit beta 1 (1162 aa).

Belongs to the RNA polymerase beta chain family. The RNAP catalytic core consists of 2 alpha, 1 beta, 1 beta' and 1 omega subunit. When a sigma factor is associated with the core the holoenzyme is formed, which can initiate transcription.

The catalysed reaction is RNA(n) + a ribonucleoside 5'-triphosphate = RNA(n+1) + diphosphate. In terms of biological role, DNA-dependent RNA polymerase catalyzes the transcription of DNA into RNA using the four ribonucleoside triphosphates as substrates. In Nocardia farcinica (strain IFM 10152), this protein is DNA-directed RNA polymerase subunit beta 1.